The following is a 325-amino-acid chain: Lipoyl synthase (325 aa).

Cys68, Cys73, Cys79, Cys94, Cys98, Cys101, and Ser308 together coordinate [4Fe-4S] cluster. Residues 80-297 (FGGGTATFMI…ARVANELGFT (218 aa)) form the Radical SAM core domain.

The protein belongs to the radical SAM superfamily. Lipoyl synthase family. It depends on [4Fe-4S] cluster as a cofactor.

It localises to the cytoplasm. It carries out the reaction [[Fe-S] cluster scaffold protein carrying a second [4Fe-4S](2+) cluster] + N(6)-octanoyl-L-lysyl-[protein] + 2 oxidized [2Fe-2S]-[ferredoxin] + 2 S-adenosyl-L-methionine + 4 H(+) = [[Fe-S] cluster scaffold protein] + N(6)-[(R)-dihydrolipoyl]-L-lysyl-[protein] + 4 Fe(3+) + 2 hydrogen sulfide + 2 5'-deoxyadenosine + 2 L-methionine + 2 reduced [2Fe-2S]-[ferredoxin]. It participates in protein modification; protein lipoylation via endogenous pathway; protein N(6)-(lipoyl)lysine from octanoyl-[acyl-carrier-protein]: step 2/2. Catalyzes the radical-mediated insertion of two sulfur atoms into the C-6 and C-8 positions of the octanoyl moiety bound to the lipoyl domains of lipoate-dependent enzymes, thereby converting the octanoylated domains into lipoylated derivatives. This chain is Lipoyl synthase, found in Alcanivorax borkumensis (strain ATCC 700651 / DSM 11573 / NCIMB 13689 / SK2).